Here is an 803-residue protein sequence, read N- to C-terminus: Nucleoporin nup82 (803 aa).

In terms of assembly, component of the nuclear pore complex (NPC). NPC constitutes the exclusive means of nucleocytoplasmic transport. NPCs allow the passive diffusion of ions and small molecules and the active, nuclear transport receptor-mediated bidirectional transport of macromolecules such as proteins, RNAs, ribonucleoparticles (RNPs), and ribosomal subunits across the nuclear envelope.

The protein localises to the nucleus. It localises to the nuclear pore complex. It is found in the nucleus membrane. Functions as a component of the nuclear pore complex (NPC). NPC components, collectively referred to as nucleoporins (NUPs), can play the role of both NPC structural components and of docking or interaction partners for transiently associated nuclear transport factors. This is Nucleoporin nup82 from Schizosaccharomyces pombe (strain 972 / ATCC 24843) (Fission yeast).